The sequence spans 2541 residues: Talin-1 (2541 aa).

Residues 86-403 (RPLKIRMLDG…GYIDIILKKK (318 aa)) form the FERM domain. The segment at 280-435 (FMAHKNCGNM…PKKSTVLQQQ (156 aa)) is interaction with LAYN. Residues 482 to 655 (RGHMPPLTSA…QTSGELLQQI (174 aa)) are helical bundle R1. Positions 656 to 786 (GESDTDPRFQ…ALNDLLQHIK (131 aa)) are helical bundle R2. Residues 787–911 (QHATGGQPIG…NAAAQNAIKK (125 aa)) form a helical bundle R3 region. The tract at residues 913 to 1043 (LVHKLEHAAK…RTAAQKAQEA (131 aa)) is helical bundle R4. Residues 1045 to 1205 (GPLEIDSALG…NRCVNCLPGQ (161 aa)) form a helical bundle R5 region. A helical bundle R6 region spans residues 1206–1356 (RDVDAAIRMV…QLITMCTQQA (151 aa)). The helical bundle R7A stretch occupies residues 1357-1452 (PGQKECDNAL…AYLVGVSDPN (96 aa)). Positions 1358–1658 (GQKECDNALR…NMRDKAPGQR (301 aa)) are interaction with VCL and F-actin. A helical bundle R8 region spans residues 1460 to 1579 (LVDPTQFARA…NLTAFASNPE (120 aa)). A glycan (O-linked (GlcNAc) threonine) is linked at Thr-1486. The helical bundle R7B stretch occupies residues 1580-1652 (FATVPAQISP…IKKLITNMRD (73 aa)). The helical bundle R9 stretch occupies residues 1654 to 1821 (APGQRECDEA…TLNEAASAAG (168 aa)). A helical bundle R10 region spans residues 1822–1972 (VVGGMVDSIT…VLAALQAGNR (151 aa)). Thr-1889 is a glycosylation site (O-linked (GlcNAc) threonine). Residues 1973–2139 (GTQACITAAS…TVKAVEDEAT (167 aa)) are helical bundle R11. The tract at residues 2140 to 2293 (KGTRALEATI…QAAEAMKGTE (154 aa)) is helical bundle R12. Positions 2292–2531 (TEWVDPEDPT…MIRQQQYKFL (240 aa)) constitute an I/LWEQ domain. The helical bundle R13 stretch occupies residues 2299–2481 (DPTVIAENEL…AAQKAAAFQD (183 aa)).

In terms of assembly, interacts with PIP5K1C and NRAP. Binds with high affinity to vinculin VCL and with low affinity to integrins. Interacts with APBB1IP; this inhibits VCL binding. Interacts with F-actin. Interacts with LAYN. Interacts with THSD1. In terms of processing, phosphorylated.

It localises to the cell projection. Its subcellular location is the ruffle membrane. The protein localises to the cytoplasm. The protein resides in the cytoskeleton. It is found in the cell surface. It localises to the cell junction. Its subcellular location is the focal adhesion. Its function is as follows. High molecular weight cytoskeletal protein concentrated at regions of cell-substratum contact and, in lymphocytes, at cell-cell contacts. Involved in connections of major cytoskeletal structures to the plasma membrane. The sequence is that of Talin-1 (TLN1) from Gallus gallus (Chicken).